The primary structure comprises 355 residues: Protein pelota homolog (355 aa).

This sequence belongs to the eukaryotic release factor 1 family. Pelota subfamily. Monomer. Requires a divalent metal cation as cofactor.

It is found in the cytoplasm. Its function is as follows. May function in recognizing stalled ribosomes, interact with stem-loop structures in stalled mRNA molecules, and effect endonucleolytic cleavage of the mRNA. May play a role in the release non-functional ribosomes and degradation of damaged mRNAs. Has endoribonuclease activity. The chain is Protein pelota homolog from Haloarcula marismortui (strain ATCC 43049 / DSM 3752 / JCM 8966 / VKM B-1809) (Halobacterium marismortui).